The sequence spans 110 residues: Insulin growth factor-like family member 1 (110 aa).

The N-terminal stretch at 1–24 (MAPRGCIVAVFAIFCISRLLCSHG) is a signal peptide. Asn71 is a glycosylation site (N-linked (GlcNAc...) asparagine).

Belongs to the IGFL family. As to quaternary structure, homodimer; disulfide-linked. In terms of tissue distribution, detected in ovary and spinal cord.

Its subcellular location is the secreted. Its function is as follows. Probable ligand of the IGFLR1 cell membrane receptor. This chain is Insulin growth factor-like family member 1 (IGFL1), found in Homo sapiens (Human).